We begin with the raw amino-acid sequence, 179 residues long: tRNA (cytidine(56)-2'-O)-methyltransferase (179 aa).

Leu84 lines the S-adenosyl-L-methionine pocket.

This sequence belongs to the aTrm56 family. As to quaternary structure, homodimer.

The protein resides in the cytoplasm. It catalyses the reaction cytidine(56) in tRNA + S-adenosyl-L-methionine = 2'-O-methylcytidine(56) in tRNA + S-adenosyl-L-homocysteine + H(+). Functionally, specifically catalyzes the AdoMet-dependent 2'-O-ribose methylation of cytidine at position 56 in tRNAs. The protein is tRNA (cytidine(56)-2'-O)-methyltransferase of Methanothermobacter thermautotrophicus (strain ATCC 29096 / DSM 1053 / JCM 10044 / NBRC 100330 / Delta H) (Methanobacterium thermoautotrophicum).